A 169-amino-acid chain; its full sequence is Protein-export protein SecB (169 aa).

It belongs to the SecB family. As to quaternary structure, homotetramer, a dimer of dimers. One homotetramer interacts with 1 SecA dimer.

It is found in the cytoplasm. One of the proteins required for the normal export of preproteins out of the cell cytoplasm. It is a molecular chaperone that binds to a subset of precursor proteins, maintaining them in a translocation-competent state. It also specifically binds to its receptor SecA. This Haemophilus influenzae (strain 86-028NP) protein is Protein-export protein SecB.